The following is a 116-amino-acid chain: Vitelline membrane protein Vm32E (116 aa).

Positions 1–17 (MQIVALTLVAFVAIAGA) are cleaved as a signal peptide. The 38-residue stretch at 36–73 (GYPAPPCPTNYLFSCQPNLAPAPCAQEAPAYGSAGAYT) folds into the VM domain.

The protein belongs to the vitelline membrane family. Post-translationally, sulfated by pip; may be involved in embryo dorsal-ventral axis determination. Sulfation by pip may occur on covalently bound glycosaminoglycans. As to expression, expressed in stage 10 egg-chambers, localized in the outer eggshell (chorion membrane).

It is found in the secreted. Major early eggshell protein. The sequence is that of Vitelline membrane protein Vm32E from Drosophila melanogaster (Fruit fly).